The sequence spans 699 residues: Elongation factor G (699 aa).

The tr-type G domain maps to 8–283 (EHIRNIGICA…AVVDFLPSPI (276 aa)). GTP is bound by residues 17–24 (AHIDAGKT), 81–85 (DTPGH), and 135–138 (NKMD).

The protein belongs to the TRAFAC class translation factor GTPase superfamily. Classic translation factor GTPase family. EF-G/EF-2 subfamily.

The protein resides in the cytoplasm. Catalyzes the GTP-dependent ribosomal translocation step during translation elongation. During this step, the ribosome changes from the pre-translocational (PRE) to the post-translocational (POST) state as the newly formed A-site-bound peptidyl-tRNA and P-site-bound deacylated tRNA move to the P and E sites, respectively. Catalyzes the coordinated movement of the two tRNA molecules, the mRNA and conformational changes in the ribosome. This chain is Elongation factor G, found in Rickettsia peacockii (strain Rustic).